Here is a 356-residue protein sequence, read N- to C-terminus: Guanine nucleotide-binding protein alpha-2 subunit (356 aa).

Glycine 2 carries N-myristoyl glycine lipidation. Cysteine 4 carries the S-palmitoyl cysteine lipid modification. Residues 32 to 356 form the G-alpha domain; the sequence is RTVKLLLLGA…QSNLHKSGLY (325 aa). Residues 35 to 48 form a G1 motif region; sequence KLLLLGAGECGKST. GTP contacts are provided by glutamate 43, glycine 45, lysine 46, serine 47, threonine 48, aspartate 153, leucine 178, threonine 184, glycine 206, asparagine 272, lysine 273, aspartate 275, and alanine 328. Residue serine 47 coordinates Mg(2+). The interval 176-184 is G2 motif; it reads DTLLLRTKT. Threonine 184 serves as a coordination point for Mg(2+). A G3 motif region spans residues 199-208; it reads FRVFDVGGQR. Residues 268–275 are G4 motif; sequence ILFLNKKD. Residues 326–331 form a G5 motif region; that stretch reads TCATDT.

It belongs to the G-alpha family. G(q) subfamily. As to quaternary structure, g proteins are composed of 3 units; alpha, beta and gamma. The alpha chain contains the guanine nucleotide binding site. Requires Mg(2+) as cofactor.

Its function is as follows. Guanine nucleotide-binding proteins (G proteins) are involved as modulators or transducers in various transmembrane signaling systems. Involved in behavioral responses to P.aeruginosa by controlling the expression of daf-7, a member of the TGF-beta family, in ASJ sensory neurons. The polypeptide is Guanine nucleotide-binding protein alpha-2 subunit (gpa-2) (Caenorhabditis elegans).